A 273-amino-acid chain; its full sequence is tRNA (guanine-N(7)-)-methyltransferase (273 aa).

The S-adenosyl-L-methionine site is built by G86, E109, R111, N142, A143, and L162. D165 is a catalytic residue. The alphaC helix stretch occupies residues 166–174 (PHFKKTKHK). Residues T240 and E242 each contribute to the S-adenosyl-L-methionine site. Residues 240 to 248 (TEEGKKVQR) are alpha6 helix.

It belongs to the class I-like SAM-binding methyltransferase superfamily. TrmB family. As to quaternary structure, catalytic component of the METTL1-WDR4 complex, composed of mettl1 and wdr4.

The protein localises to the nucleus. The catalysed reaction is guanosine(46) in tRNA + S-adenosyl-L-methionine = N(7)-methylguanosine(46) in tRNA + S-adenosyl-L-homocysteine. The enzyme catalyses a guanosine in mRNA + S-adenosyl-L-methionine = an N(7)-methylguanosine in mRNA + S-adenosyl-L-homocysteine. It catalyses the reaction a guanosine in miRNA + S-adenosyl-L-methionine = an N(7)-methylguanosine in miRNA + S-adenosyl-L-homocysteine. It functions in the pathway tRNA modification; N(7)-methylguanine-tRNA biosynthesis. Functionally, catalytic component of METTL1-WDR4 methyltransferase complex that mediates the formation of N(7)-methylguanine in a subset of RNA species, such as tRNAs, mRNAs and microRNAs (miRNAs). Catalyzes the formation of N(7)-methylguanine at position 46 (m7G46) in a large subset of tRNAs that contain the 5'-RAGGU-3' motif within the variable loop. M7G46 interacts with C13-G22 in the D-loop to stabilize tRNA tertiary structure and protect tRNAs from decay. Also acts as a methyltransferase for a subset of internal N(7)-methylguanine in mRNAs. Internal N(7)-methylguanine methylation of mRNAs in response to stress promotes their relocalization to stress granules, thereby suppressing their translation. Also methylates a specific subset of miRNAs. The polypeptide is tRNA (guanine-N(7)-)-methyltransferase (mettl1) (Xenopus laevis (African clawed frog)).